The primary structure comprises 40 residues: MADTTGRIPLWLIGTVTGIIVIGLLGIFFYGSYSGLGSSL.

The helical transmembrane segment at 8-28 (IPLWLIGTVTGIIVIGLLGIF) threads the bilayer.

This sequence belongs to the PsbJ family. PSII is composed of 1 copy each of membrane proteins PsbA, PsbB, PsbC, PsbD, PsbE, PsbF, PsbH, PsbI, PsbJ, PsbK, PsbL, PsbM, PsbT, PsbX, PsbY, PsbZ, Psb30/Ycf12, at least 3 peripheral proteins of the oxygen-evolving complex and a large number of cofactors. It forms dimeric complexes.

The protein resides in the plastid. The protein localises to the chloroplast thylakoid membrane. One of the components of the core complex of photosystem II (PSII). PSII is a light-driven water:plastoquinone oxidoreductase that uses light energy to abstract electrons from H(2)O, generating O(2) and a proton gradient subsequently used for ATP formation. It consists of a core antenna complex that captures photons, and an electron transfer chain that converts photonic excitation into a charge separation. The sequence is that of Photosystem II reaction center protein J from Pinus koraiensis (Korean pine).